The following is a 153-amino-acid chain: NAD(P)H-quinone oxidoreductase subunit N (153 aa).

Belongs to the complex I NdhN subunit family. NDH-1 can be composed of about 15 different subunits; different subcomplexes with different compositions have been identified which probably have different functions.

It localises to the cellular thylakoid membrane. It catalyses the reaction a plastoquinone + NADH + (n+1) H(+)(in) = a plastoquinol + NAD(+) + n H(+)(out). It carries out the reaction a plastoquinone + NADPH + (n+1) H(+)(in) = a plastoquinol + NADP(+) + n H(+)(out). Its function is as follows. NDH-1 shuttles electrons from an unknown electron donor, via FMN and iron-sulfur (Fe-S) centers, to quinones in the respiratory and/or the photosynthetic chain. The immediate electron acceptor for the enzyme in this species is believed to be plastoquinone. Couples the redox reaction to proton translocation, and thus conserves the redox energy in a proton gradient. Cyanobacterial NDH-1 also plays a role in inorganic carbon-concentration. In Prochlorococcus marinus (strain MIT 9313), this protein is NAD(P)H-quinone oxidoreductase subunit N.